The sequence spans 359 residues: Phospho-N-acetylmuramoyl-pentapeptide-transferase (359 aa).

10 helical membrane passes run 3–23 (QILIAVAIALAVAILLTPVLI), 55–75 (VAIIAGIWVSYFGTHLVGVLM), 84–104 (GLLVLGLATSLGVVGFLDDLI), 117–137 (TAKTVGILVAAVLFGVLALQF), 156–176 (IATVTLAPAVFVLFCVVVVSA), 190–210 (LAAGAMAMVCAAYVLITFWQF), 231–251 (LAIIAAATAGACIGFLWWNAA), 255–275 (IFMGDTGSLALGGIIAGLSVT), 283–303 (VVLGALFVAEVTSVVVQILAF), and 330–350 (VIIRFWLLTAIACGLGVALFY).

Belongs to the glycosyltransferase 4 family. MraY subfamily. Requires Mg(2+) as cofactor.

It is found in the cell membrane. The enzyme catalyses UDP-N-acetyl-alpha-D-muramoyl-L-alanyl-gamma-D-glutamyl-meso-2,6-diaminopimeloyl-D-alanyl-D-alanine + di-trans,octa-cis-undecaprenyl phosphate = di-trans,octa-cis-undecaprenyl diphospho-N-acetyl-alpha-D-muramoyl-L-alanyl-D-glutamyl-meso-2,6-diaminopimeloyl-D-alanyl-D-alanine + UMP. The protein operates within cell wall biogenesis; peptidoglycan biosynthesis. Catalyzes the initial step of the lipid cycle reactions in the biosynthesis of the cell wall peptidoglycan: transfers peptidoglycan precursor phospho-MurNAc-pentapeptide from UDP-MurNAc-pentapeptide onto the lipid carrier undecaprenyl phosphate, yielding undecaprenyl-pyrophosphoryl-MurNAc-pentapeptide, known as lipid I. This Mycolicibacterium gilvum (strain PYR-GCK) (Mycobacterium gilvum (strain PYR-GCK)) protein is Phospho-N-acetylmuramoyl-pentapeptide-transferase.